Here is a 584-residue protein sequence, read N- to C-terminus: MAGGVDGPIGIPFPDHSSDILSGLNEQRTQGLLCDVVILVEGREFPTHRSVLAACSQYFKKLFTSGAVVDQQNVYEIDFVSAEALTALMDFAYTATLTVSTANVGDILSAARLLEIPAVSHVCADLLDRQILAADAGADAGQLDLVDQIDQRNLLRAKEYLEFFQSNPMNSLPPAAAAAAASFPWSAFGASDDDLDATKEAVAAAVAAVAAGDCNGLDFYGPGPPAERPPTGDGDEGDSNPGLWPERDEDAPTGGLFPPPVAPPAATQNGHYGRGGEEEAASLSEAAPEPGDSPGFLSGAAEGEDGDGPDVDGLAASTLLQQMMSSVGRAGAAAGDSDEESRADDKGVMDYYLKYFSGAHDGDVYPAWSQKVEKKIRAKAFQKCPICEKVIQGAGKLPRHIRTHTGEKPYECNICKVRFTRQDKLKVHMRKHTGEKPYLCQQCGAAFAHNYDLKNHMRVHTGLRPYQCDSCCKTFVRSDHLHRHLKKDGCNGVPSRRGRKPRVRGGAPDPSPGATATPGAPAQPSSPDARRNGQEKHFKDEDEDEDVASPDGLGRLNVAGAGGGGDSGGGPGAATDGNFTAGLA.

One can recognise a BTB domain in the interval 34–101 (CDVVILVEGR…AYTATLTVST (68 aa)). Positions 220-313 (YGPGPPAERP…EDGDGPDVDG (94 aa)) are disordered. The tract at residues 277 to 584 (EEEAASLSEA…TDGNFTAGLA (308 aa)) is mediates interaction with KHDRBS1. Low complexity predominate over residues 281–290 (ASLSEAAPEP). Ser-337 and Ser-341 each carry phosphoserine. A mediates interaction with RELA region spans residues 349 to 584 (MDYYLKYFSG…TDGNFTAGLA (236 aa)). The mediates interaction with SMAD4 stretch occupies residues 377 to 584 (RAKAFQKCPI…TDGNFTAGLA (208 aa)). 2 C2H2-type zinc fingers span residues 382 to 404 (QKCP…IRTH) and 410 to 432 (YECN…MRKH). Residue Lys-436 forms a Glycyl lysine isopeptide (Lys-Gly) (interchain with G-Cter in SUMO2) linkage. The C2H2-type 3 zinc-finger motif lies at 438-460 (YLCQQCGAAFAHNYDLKNHMRVH). A C2H2-type 4; atypical zinc finger spans residues 466-490 (YQCDSCCKTFVRSDHLHRHLKKDGC). Positions 486-584 (KKDGCNGVPS…TDGNFTAGLA (99 aa)) are disordered. Residues 505–527 (GGAPDPSPGATATPGAPAQPSSP) show a composition bias toward low complexity. A phosphoserine mark is found at Ser-511, Ser-525, and Ser-526. Positions 528-540 (DARRNGQEKHFKD) are enriched in basic and acidic residues. Lys-539 is covalently cross-linked (Glycyl lysine isopeptide (Lys-Gly) (interchain with G-Cter in SUMO2)). The residue at position 549 (Ser-549) is a Phosphoserine. Over residues 560 to 572 (GAGGGGDSGGGPG) the composition is skewed to gly residues.

Homodimer. Interacts with BCL6. Interacts with RELA; involved in the control by RELA of the accessibility of target gene promoters. Interacts with AR (via NR LBD domain); the interaction is direct and androgen-dependent. Interacts with NCOR1. Interacts with NCOR2. Interacts with SMAD4; the interaction is direct and stimulated by TGFB1. Interacts with HDAC1. Interacts with SP1; ZBTB7A prevents the binding to GC-rich motifs in promoters and represses the transcriptional activity of SP1. Interacts with the DNA-dependent protein kinase complex/DNA-PKc. Interacts with KHDRBS1; negatively regulates KHDRBS1 splicing activity. In terms of processing, sumoylated. Undergoes sumoylation with SUMO1 that may regulate its transcriptional activity. Widely expressed. In normal thymus, expressed in medullary epithelial cells and Hassle's corpuscles (at protein level). In tonsil, expressed in squamous epithelium and germinal center lymphocytes (at protein level). Up-regulated in a subset of lymphomas, as well as in a subset of breast, lung, colon, prostate and bladder carcinomas (at protein level). Expressed in adipose tissues.

It localises to the nucleus. Its function is as follows. Transcription factor that represses the transcription of a wide range of genes involved in cell proliferation and differentiation. Directly and specifically binds to the consensus sequence 5'-[GA][CA]GACCCCCCCCC-3' and represses transcription both by regulating the organization of chromatin and through the direct recruitment of transcription factors to gene regulatory regions. Negatively regulates SMAD4 transcriptional activity in the TGF-beta signaling pathway through these two mechanisms. That is, recruits the chromatin regulator HDAC1 to the SMAD4-DNA complex and in parallel prevents the recruitment of the transcriptional activators CREBBP and EP300. Collaborates with transcription factors like RELA to modify the accessibility of gene transcription regulatory regions to secondary transcription factors. Also directly interacts with transcription factors like SP1 to prevent their binding to DNA. Functions as an androgen receptor/AR transcriptional corepressor by recruiting NCOR1 and NCOR2 to the androgen response elements/ARE on target genes. Thereby, negatively regulates androgen receptor signaling and androgen-induced cell proliferation. Involved in the switch between fetal and adult globin expression during erythroid cells maturation. Through its interaction with the NuRD complex regulates chromatin at the fetal globin genes to repress their transcription. Specifically represses the transcription of the tumor suppressor ARF isoform from the CDKN2A gene. Efficiently abrogates E2F1-dependent CDKN2A transactivation. Regulates chondrogenesis through the transcriptional repression of specific genes via a mechanism that also requires histone deacetylation. Regulates cell proliferation through the transcriptional regulation of genes involved in glycolysis. Involved in adipogenesis through the regulation of genes involved in adipocyte differentiation. Plays a key role in the differentiation of lymphoid progenitors into B and T lineages. Promotes differentiation towards the B lineage by inhibiting the T-cell instructive Notch signaling pathway through the specific transcriptional repression of Notch downstream target genes. Also regulates osteoclast differentiation. May also play a role, independently of its transcriptional activity, in double-strand break repair via classical non-homologous end joining/cNHEJ. Recruited to double-strand break sites on damage DNA, interacts with the DNA-dependent protein kinase complex and directly regulates its stability and activity in DNA repair. May also modulate the splicing activity of KHDRBS1 toward BCL2L1 in a mechanism which is histone deacetylase-dependent and thereby negatively regulates the pro-apoptotic effect of KHDRBS1. The protein is Zinc finger and BTB domain-containing protein 7A of Homo sapiens (Human).